Here is a 424-residue protein sequence, read N- to C-terminus: Adenylosuccinate synthetase (424 aa).

Residues G12–K18 and G40–T42 contribute to the GTP site. D13 (proton acceptor) is an active-site residue. Residues D13 and G40 each coordinate Mg(2+). IMP is bound by residues D13–K16, N38–H41, T130, R144, N220, T235, and R299. The active-site Proton donor is H41. V295–R301 provides a ligand contact to substrate. Residues R301, K327–D329, and G412–G414 contribute to the GTP site.

This sequence belongs to the adenylosuccinate synthetase family. As to quaternary structure, homodimer. The cofactor is Mg(2+).

It localises to the cytoplasm. It carries out the reaction IMP + L-aspartate + GTP = N(6)-(1,2-dicarboxyethyl)-AMP + GDP + phosphate + 2 H(+). The protein operates within purine metabolism; AMP biosynthesis via de novo pathway; AMP from IMP: step 1/2. Functionally, plays an important role in the de novo pathway and in the salvage pathway of purine nucleotide biosynthesis. Catalyzes the first committed step in the biosynthesis of AMP from IMP. This is Adenylosuccinate synthetase from Aspergillus fumigatus (strain CBS 144.89 / FGSC A1163 / CEA10) (Neosartorya fumigata).